A 274-amino-acid polypeptide reads, in one-letter code: Penicillin-insensitive murein endopeptidase (274 aa).

The signal sequence occupies residues 1–19 (MKKTAIALLAWFVSSASLA). 3 disulfides stabilise this stretch: C44-C265, C187-C235, and C216-C223. Residues H110, H113, D120, D147, H150, and H211 each contribute to the Zn(2+) site. A disordered region spans residues 225 to 274 (DQPLPPPGDGCGAELQSWFEPPKPGTTKPEKKTPPPLPPSCQALLDEHVL).

Belongs to the peptidase M74 family. In terms of assembly, dimer. Zn(2+) is required as a cofactor.

It is found in the periplasm. In terms of biological role, murein endopeptidase that cleaves the D-alanyl-meso-2,6-diamino-pimelyl amide bond that connects peptidoglycan strands. Likely plays a role in the removal of murein from the sacculus. This chain is Penicillin-insensitive murein endopeptidase, found in Salmonella paratyphi A (strain AKU_12601).